Consider the following 95-residue polypeptide: Aspartyl/glutamyl-tRNA(Asn/Gln) amidotransferase subunit C (95 aa).

The protein belongs to the GatC family. As to quaternary structure, heterotrimer of A, B and C subunits.

It catalyses the reaction L-glutamyl-tRNA(Gln) + L-glutamine + ATP + H2O = L-glutaminyl-tRNA(Gln) + L-glutamate + ADP + phosphate + H(+). The enzyme catalyses L-aspartyl-tRNA(Asn) + L-glutamine + ATP + H2O = L-asparaginyl-tRNA(Asn) + L-glutamate + ADP + phosphate + 2 H(+). Allows the formation of correctly charged Asn-tRNA(Asn) or Gln-tRNA(Gln) through the transamidation of misacylated Asp-tRNA(Asn) or Glu-tRNA(Gln) in organisms which lack either or both of asparaginyl-tRNA or glutaminyl-tRNA synthetases. The reaction takes place in the presence of glutamine and ATP through an activated phospho-Asp-tRNA(Asn) or phospho-Glu-tRNA(Gln). The polypeptide is Aspartyl/glutamyl-tRNA(Asn/Gln) amidotransferase subunit C (Jannaschia sp. (strain CCS1)).